The chain runs to 51 residues: Sperm protamine P1 (51 aa).

Belongs to the protamine P1 family. As to quaternary structure, cross-linked by interchain disulfide bonds around the DNA-helix. Testis.

The protein localises to the nucleus. The protein resides in the chromosome. Its function is as follows. Protamines substitute for histones in the chromatin of sperm during the haploid phase of spermatogenesis. They compact sperm DNA into a highly condensed, stable and inactive complex. The sequence is that of Sperm protamine P1 (PRM1) from Hylobates lar (Lar gibbon).